Reading from the N-terminus, the 286-residue chain is UDP-3-O-acyl-N-acetylglucosamine deacetylase (286 aa).

Residues His-79, His-237, and Asp-241 each coordinate Zn(2+). His-264 (proton donor) is an active-site residue.

It belongs to the LpxC family. Zn(2+) is required as a cofactor.

The enzyme catalyses a UDP-3-O-[(3R)-3-hydroxyacyl]-N-acetyl-alpha-D-glucosamine + H2O = a UDP-3-O-[(3R)-3-hydroxyacyl]-alpha-D-glucosamine + acetate. Its pathway is glycolipid biosynthesis; lipid IV(A) biosynthesis; lipid IV(A) from (3R)-3-hydroxytetradecanoyl-[acyl-carrier-protein] and UDP-N-acetyl-alpha-D-glucosamine: step 2/6. In terms of biological role, catalyzes the hydrolysis of UDP-3-O-myristoyl-N-acetylglucosamine to form UDP-3-O-myristoylglucosamine and acetate, the committed step in lipid A biosynthesis. This Chlamydia muridarum (strain MoPn / Nigg) protein is UDP-3-O-acyl-N-acetylglucosamine deacetylase.